Here is a 1235-residue protein sequence, read N- to C-terminus: Ubiquitin carboxyl-terminal hydrolase 40 (1235 aa).

The USP domain occupies 41–482; it reads SGIRNQGGTC…SAYMLFYRKS (442 aa). C50 functions as the Nucleophile in the catalytic mechanism. Residue H305 is the Proton acceptor of the active site. Positions 1180-1190 are enriched in basic and acidic residues; that stretch reads IRDDTGKEKQK. The tract at residues 1180–1235 is disordered; sequence IRDDTGKEKQKQRALGRRKSQEALHEQSSYILSSAETPARPRAPETSLSIHVGSFR. Positions 1205 to 1215 are enriched in polar residues; sequence EQSSYILSSAE.

It belongs to the peptidase C19 family. Broadly expressed.

The enzyme catalyses Thiol-dependent hydrolysis of ester, thioester, amide, peptide and isopeptide bonds formed by the C-terminal Gly of ubiquitin (a 76-residue protein attached to proteins as an intracellular targeting signal).. Its function is as follows. May be catalytically inactive. The polypeptide is Ubiquitin carboxyl-terminal hydrolase 40 (USP40) (Homo sapiens (Human)).